The chain runs to 237 residues: Small ribosomal subunit protein eS4 (237 aa).

One can recognise an S4 RNA-binding domain in the interval 37–100 (IPLAVLLRDV…NEYYRIIPDP (64 aa)).

This sequence belongs to the eukaryotic ribosomal protein eS4 family.

The protein is Small ribosomal subunit protein eS4 of Caldivirga maquilingensis (strain ATCC 700844 / DSM 13496 / JCM 10307 / IC-167).